A 584-amino-acid chain; its full sequence is Pectinesterase 1 (584 aa).

The signal sequence occupies residues 1 to 42 (MTHIKEFFTKLSESSSNQNISNIPKKKKKLFLALFATLLVVA). Residues Asn-108, Asn-129, and Asn-226 are each glycosylated (N-linked (GlcNAc...) asparagine). Substrate is bound by residues Thr-348 and Gln-378. Residue Asp-401 is the Proton donor of the active site. Cys-415 and Cys-435 are oxidised to a cystine. Asp-422 acts as the Nucleophile in catalysis. Arg-490 and Trp-492 together coordinate substrate.

This sequence in the N-terminal section; belongs to the PMEI family. It in the C-terminal section; belongs to the pectinesterase family. In terms of tissue distribution, expressed at high levels in flower buds, shoots and young leaves, and at lower levels in young fruit, young bark and juice vesicles. Not expressed at significant levels in leaf abscission zones following ethylene treatment or in mature leaves. In fruit abscission zones, expression was initially undetectable but increased markedly following ethylene treatment.

The protein resides in the secreted. It localises to the cell wall. The catalysed reaction is [(1-&gt;4)-alpha-D-galacturonosyl methyl ester](n) + n H2O = [(1-&gt;4)-alpha-D-galacturonosyl](n) + n methanol + n H(+). It functions in the pathway glycan metabolism; pectin degradation; 2-dehydro-3-deoxy-D-gluconate from pectin: step 1/5. Acts in the modification of cell walls via demethylesterification of cell wall pectin. The protein is Pectinesterase 1 (PECS-1.1) of Citrus sinensis (Sweet orange).